The chain runs to 281 residues: Insulin-like growth factor-binding protein 7 (281 aa).

A signal peptide spans 1 to 25; the sequence is MERPPRALLLGAAGLLLLLLPLSSS. Residues 27–113 enclose the IGFBP N-terminal domain; it reads SSDACGPCVP…PATLAVCVCK (87 aa). 8 disulfides stabilise this stretch: Cys31-Cys56, Cys34-Cys58, Cys39-Cys59, Cys47-Cys62, Cys70-Cys86, Cys80-Cys110, Cys112-Cys130, and Cys119-Cys155. In terms of domain architecture, Kazal-like spans 98 to 157; the sequence is GAAAGGPATLAVCVCKSRYPVCGSNGITYPSGCQLRAASLRAESRGEKAITQVSKGTCEQ. An Ig-like C2-type domain is found at 159-263; that stretch reads PSIVTPPKDI…GQASAAAKIT (105 aa). An N-linked (GlcNAc...) asparagine glycan is attached at Asn170. Cys180 and Cys247 form a disulfide bridge. Residue Ser238 is modified to Phosphoserine.

In terms of assembly, may interact with VPS24/CHMP3; the relevance of such interaction however remains unclear. Interacts with CD93; this interaction plays a role in endothelial cells angiogenesis. In terms of processing, N-glycosylated. As to expression, expressed at high levels in lung, kidney, small intestine, testis and uterus and at moderate levels in liver.

It is found in the secreted. Functionally, binds IGF1 and IGF2 with a relatively low affinity. Stimulates prostacyclin (PGI2) production. Stimulates cell adhesion. Acts as a ligand for CD93 to play a role in angiogenesis. The protein is Insulin-like growth factor-binding protein 7 (Igfbp7) of Mus musculus (Mouse).